Reading from the N-terminus, the 240-residue chain is DISARM protein DrmC (240 aa).

The region spanning 174-201 (GYSSLHAKVIMVDEEKAFVSSANLSYNG) is the PLD phosphodiesterase domain. Residues His-179, Lys-181, and Asp-186 contribute to the active site.

It belongs to the phospholipase D family.

It localises to the cytoplasm. In terms of biological role, component of antiviral defense system DISARM (defense island system associated with restriction-modification), composed of DrmE, DrmA, DrmB, DrmC and DrmMII. DISARM is probably a multi-gene restriction module, this subunit is probably a phospholipase or nuclease. Expression of DISARM in B.subtilis (strain BEST7003) confers resistance to phages Nf, phi29, phi105, phi3T, SPO1, SPR and SPP1. Protection is over 10(7)-fold against phi3T, 10(4)-10(5)-fold against Nf, phi29, phi105 and SPR, 100-fold against SPO1 and 10-fold against SPP1. DISARM does not interfere with phage adsorption, but instead interferes with (phi3T) DNA replication early in its cycle, preventing replication, circularization and lysogeny and probably causes phage DNA degradation (DNA is degraded in SPP1-infected cells). This chain is DISARM protein DrmC, found in Bacillus paralicheniformis (strain ATCC 9945a / NCIMB 11709 / CD-2).